A 507-amino-acid polypeptide reads, in one-letter code: Probable Xaa-Pro aminopeptidase ARB_01886 (507 aa).

Asp-275, Asp-286, Glu-434, and Glu-478 together coordinate Mn(2+).

It belongs to the peptidase M24B family. Requires Mn(2+) as cofactor.

The enzyme catalyses Release of any N-terminal amino acid, including proline, that is linked to proline, even from a dipeptide or tripeptide.. Functionally, catalyzes the removal of a penultimate prolyl residue from the N-termini of peptides. The chain is Probable Xaa-Pro aminopeptidase ARB_01886 from Arthroderma benhamiae (strain ATCC MYA-4681 / CBS 112371) (Trichophyton mentagrophytes).